We begin with the raw amino-acid sequence, 607 residues long: UvrABC system protein C (607 aa).

Positions Gly-16–Ile-94 constitute a GIY-YIG domain. Residues Asn-203–Val-238 form the UVR domain.

The protein belongs to the UvrC family. In terms of assembly, interacts with UvrB in an incision complex.

The protein resides in the cytoplasm. The UvrABC repair system catalyzes the recognition and processing of DNA lesions. UvrC both incises the 5' and 3' sides of the lesion. The N-terminal half is responsible for the 3' incision and the C-terminal half is responsible for the 5' incision. In Pseudomonas fluorescens (strain ATCC BAA-477 / NRRL B-23932 / Pf-5), this protein is UvrABC system protein C.